An 89-amino-acid chain; its full sequence is Small ribosomal subunit protein uS15 (89 aa).

The protein belongs to the universal ribosomal protein uS15 family. As to quaternary structure, part of the 30S ribosomal subunit. Forms a bridge to the 50S subunit in the 70S ribosome, contacting the 23S rRNA.

Functionally, one of the primary rRNA binding proteins, it binds directly to 16S rRNA where it helps nucleate assembly of the platform of the 30S subunit by binding and bridging several RNA helices of the 16S rRNA. In terms of biological role, forms an intersubunit bridge (bridge B4) with the 23S rRNA of the 50S subunit in the ribosome. The chain is Small ribosomal subunit protein uS15 from Arthrobacter sp. (strain FB24).